We begin with the raw amino-acid sequence, 301 residues long: Cardiolipin synthase (CMP-forming) (301 aa).

A disordered region spans residues 70–93 (SGAGKAAPRPAAGAGAAAEAPGGQ). Positions 71–93 (GAGKAAPRPAAGAGAAAEAPGGQ) are enriched in low complexity. 5 consecutive transmembrane segments (helical) span residues 109–129 (IPNMLSMTRIGLAPVLGYLII), 133–153 (FNIALGVFALAGLTDLLDGFI), 190–212 (IPVPLTYMIISRDVMLIAAVFYV), 250–270 (LILVAASLAAPVFNYADSIYL), and 272–292 (ILWCFTAFTTAASAYSYYHYG).

The protein belongs to the CDP-alcohol phosphatidyltransferase class-I family. A divalent metal cation is required as a cofactor. Highly expressed in tissues such as heart, skeletal muscle and liver.

The protein resides in the mitochondrion inner membrane. The catalysed reaction is a CDP-1,2-diacyl-sn-glycerol + a 1,2-diacyl-sn-glycero-3-phospho-(1'-sn-glycerol) = a cardiolipin + CMP + H(+). In terms of biological role, catalyzes the synthesis of cardiolipin (CL) (diphosphatidylglycerol) by specifically transferring a phosphatidyl group from CDP-diacylglycerol to phosphatidylglycerol (PG). CL is a key phospholipid in mitochondrial membranes and plays important roles in maintaining the functional integrity and dynamics of mitochondria under both optimal and stress conditions. This is Cardiolipin synthase (CMP-forming) (CRLS1) from Homo sapiens (Human).